Consider the following 1090-residue polypeptide: Exocyst complex component SEC5B (1090 aa).

A compositionally biased stretch (acidic residues) spans 1–12; the sequence is MSSSDDLDEDEL. A disordered region spans residues 1 to 126; the sequence is MSSSDDLDED…ARKEDDRAWD (126 aa). Positions 23–46 are enriched in polar residues; it reads RDVTYQKPPSANSRKPVTNLVQQP. Low complexity predominate over residues 52-62; the sequence is AAAPPSKGGAK. Residues 96 to 109 show a composition bias toward gly residues; sequence GGGGDGGGGRGRGG. Over residues 110–126 the composition is skewed to basic and acidic residues; the sequence is SGKERGRARKEDDRAWD. Serine 179 carries the post-translational modification Phosphoserine. The segment covering 486–502 has biased composition (polar residues); sequence VQLSDDTSSMEDNQVQV. Disordered regions lie at residues 486 to 511, 984 to 1013, and 1055 to 1090; these read VQLS…ESAR, ETVE…QSSV, and PVAK…PRRR. Residues 999–1010 are compositionally biased toward basic and acidic residues; it reads RGSEDAISDDKQ. The segment covering 1062–1071 has biased composition (polar residues); that stretch reads SRTSTDSPSR.

Belongs to the SEC5 family. As to quaternary structure, the exocyst complex is composed of SEC3, SEC5, SEC6, SEC8, SEC10, EXO70A1 and EXO84B.

Functionally, component of the exocyst complex involved in the docking of exocytic vesicles with fusion sites on the plasma membrane during regulated or polarized secretion. Involved in polarized cell growth and organ morphogenesis. During cytokinesis, involved in cell plate initiation, cell plate maturation and formation of new primary cell wall. This is Exocyst complex component SEC5B (SEC5B) from Arabidopsis thaliana (Mouse-ear cress).